A 216-amino-acid chain; its full sequence is Ribosomal RNA large subunit methyltransferase E (216 aa).

S-adenosyl-L-methionine is bound by residues G67, W69, D87, D103, and D128. K168 (proton acceptor) is an active-site residue.

This sequence belongs to the class I-like SAM-binding methyltransferase superfamily. RNA methyltransferase RlmE family.

It localises to the cytoplasm. It catalyses the reaction uridine(2552) in 23S rRNA + S-adenosyl-L-methionine = 2'-O-methyluridine(2552) in 23S rRNA + S-adenosyl-L-homocysteine + H(+). Functionally, specifically methylates the uridine in position 2552 of 23S rRNA at the 2'-O position of the ribose in the fully assembled 50S ribosomal subunit. The sequence is that of Ribosomal RNA large subunit methyltransferase E from Acinetobacter baylyi (strain ATCC 33305 / BD413 / ADP1).